The sequence spans 205 residues: Inactive ribonuclease-like protein 9 (205 aa).

An N-terminal signal peptide occupies residues 1-24 (MMLITTHSLLLLLLLLQLLQPLQF). 3 cysteine pairs are disulfide-bonded: cysteine 97–cysteine 152, cysteine 115–cysteine 167, and cysteine 122–cysteine 129. N-linked (GlcNAc...) asparagine glycans are attached at residues asparagine 130 and asparagine 142.

The protein belongs to the pancreatic ribonuclease family.

The protein resides in the secreted. Functionally, does not exhibit any ribonuclease activity. The protein is Inactive ribonuclease-like protein 9 (RNASE9) of Cebus capucinus (White-faced sapajou).